Consider the following 390-residue polypeptide: 1-deoxy-D-xylulose 5-phosphate reductoisomerase (390 aa).

NADPH contacts are provided by T10, G11, S12, V13, and N124. K125 serves as a coordination point for 1-deoxy-D-xylulose 5-phosphate. E126 contributes to the NADPH binding site. D150 is a binding site for Mn(2+). 1-deoxy-D-xylulose 5-phosphate is bound by residues S151, E152, S181, and H204. E152 serves as a coordination point for Mn(2+). G210 is an NADPH binding site. S217, N222, K223, and E226 together coordinate 1-deoxy-D-xylulose 5-phosphate. E226 contacts Mn(2+).

The protein belongs to the DXR family. Mg(2+) is required as a cofactor. The cofactor is Mn(2+).

It carries out the reaction 2-C-methyl-D-erythritol 4-phosphate + NADP(+) = 1-deoxy-D-xylulose 5-phosphate + NADPH + H(+). The protein operates within isoprenoid biosynthesis; isopentenyl diphosphate biosynthesis via DXP pathway; isopentenyl diphosphate from 1-deoxy-D-xylulose 5-phosphate: step 1/6. Functionally, catalyzes the NADPH-dependent rearrangement and reduction of 1-deoxy-D-xylulose-5-phosphate (DXP) to 2-C-methyl-D-erythritol 4-phosphate (MEP). The chain is 1-deoxy-D-xylulose 5-phosphate reductoisomerase from Janthinobacterium sp. (strain Marseille) (Minibacterium massiliensis).